A 331-amino-acid polypeptide reads, in one-letter code: Anthranilate phosphoribosyltransferase (331 aa).

Residues G78, 81–82 (GD), S86, 88–91 (NIST), 106–114 (KHGNKSITS), and S118 contribute to the 5-phospho-alpha-D-ribose 1-diphosphate site. Position 78 (G78) interacts with anthranilate. S90 serves as a coordination point for Mg(2+). An anthranilate-binding site is contributed by N109. R163 serves as a coordination point for anthranilate. Mg(2+) is bound by residues D222 and E223.

This sequence belongs to the anthranilate phosphoribosyltransferase family. As to quaternary structure, homodimer. Mg(2+) serves as cofactor.

It carries out the reaction N-(5-phospho-beta-D-ribosyl)anthranilate + diphosphate = 5-phospho-alpha-D-ribose 1-diphosphate + anthranilate. It functions in the pathway amino-acid biosynthesis; L-tryptophan biosynthesis; L-tryptophan from chorismate: step 2/5. Its function is as follows. Catalyzes the transfer of the phosphoribosyl group of 5-phosphorylribose-1-pyrophosphate (PRPP) to anthranilate to yield N-(5'-phosphoribosyl)-anthranilate (PRA). In Staphylococcus epidermidis (strain ATCC 35984 / DSM 28319 / BCRC 17069 / CCUG 31568 / BM 3577 / RP62A), this protein is Anthranilate phosphoribosyltransferase.